Reading from the N-terminus, the 309-residue chain is Probable lipid kinase YegS-like (309 aa).

Positions 1–134 constitute a DAGKc domain; the sequence is MAPSHWRVIL…VDLLRIDADH (134 aa). Residues T39, 65 to 71, and T96 each bind ATP; that span reads GDGTLSE. The Mg(2+) site is built by L219, D222, and L224. Residue E280 is the Proton acceptor of the active site.

It belongs to the diacylglycerol/lipid kinase family. YegS lipid kinase subfamily. Mg(2+) serves as cofactor. It depends on Ca(2+) as a cofactor.

Its subcellular location is the cytoplasm. Its function is as follows. Probably phosphorylates lipids; the in vivo substrate is unknown. The polypeptide is Probable lipid kinase YegS-like (Xanthomonas euvesicatoria pv. vesicatoria (strain 85-10) (Xanthomonas campestris pv. vesicatoria)).